A 33-amino-acid chain; its full sequence is MRTGTRCDLGELSHPRKTLPPRGMGILCNYTGN.

The tract at residues 1–24 (MRTGTRCDLGELSHPRKTLPPRGM) is disordered.

This is an uncharacterized protein from Treponema pallidum (strain Nichols).